The chain runs to 173 residues: Ribosome maturation factor RimM (173 aa).

In terms of domain architecture, PRC barrel spans 92-165 (EDEYYHTDLI…RVVVALPQEI (74 aa)).

This sequence belongs to the RimM family. As to quaternary structure, binds ribosomal protein uS19.

It is found in the cytoplasm. Its function is as follows. An accessory protein needed during the final step in the assembly of 30S ribosomal subunit, possibly for assembly of the head region. Essential for efficient processing of 16S rRNA. May be needed both before and after RbfA during the maturation of 16S rRNA. It has affinity for free ribosomal 30S subunits but not for 70S ribosomes. In Bradyrhizobium diazoefficiens (strain JCM 10833 / BCRC 13528 / IAM 13628 / NBRC 14792 / USDA 110), this protein is Ribosome maturation factor RimM.